Here is a 131-residue protein sequence, read N- to C-terminus: Large ribosomal subunit protein bL12 (131 aa).

This sequence belongs to the bacterial ribosomal protein bL12 family. As to quaternary structure, homodimer. Part of the ribosomal stalk of the 50S ribosomal subunit. Forms a multimeric L10(L12)X complex, where L10 forms an elongated spine to which 2 to 4 L12 dimers bind in a sequential fashion. Binds GTP-bound translation factors.

Functionally, forms part of the ribosomal stalk which helps the ribosome interact with GTP-bound translation factors. Is thus essential for accurate translation. The chain is Large ribosomal subunit protein bL12 from Prochlorococcus marinus (strain MIT 9301).